The primary structure comprises 103 residues: Nucleoid-associated protein Adeh_3636 (103 aa).

The protein belongs to the YbaB/EbfC family. As to quaternary structure, homodimer.

It is found in the cytoplasm. It localises to the nucleoid. In terms of biological role, binds to DNA and alters its conformation. May be involved in regulation of gene expression, nucleoid organization and DNA protection. The sequence is that of Nucleoid-associated protein Adeh_3636 from Anaeromyxobacter dehalogenans (strain 2CP-C).